A 298-amino-acid chain; its full sequence is MNQTYGRLVSRAAIAATAMASALLLIKIFAWWYTGSVSILAALVDSLVDIAASLTNLLVVRYSLQPADDEHTFGHGKAESLAALAQSMFISGSALFLTSIQNLIKPTPMNDPGVGIGVTVIALICTIILVTFQRWVVRKTQSQAVRADMLHYQSDVMMNGAILIALGLSWYGWHRADALFALGIGIYILYSALRMGYEAVQSLLDRALPDAERQEIIDIVTSWPGVSGAHDLRTRQSGPTRFIQIHLEMEDNLPLVQAHFVADQVEQAILRRFPGSDVIIHQDPCSVVPREGRKFELV.

The chain crosses the membrane as a helical span at residues 24–44 (LLIKIFAWWYTGSVSILAALV). Zn(2+) contacts are provided by D45 and D49. The next 2 membrane-spanning stretches (helical) occupy residues 80-100 (SLAALAQSMFISGSALFLTSI) and 112-132 (PGVGIGVTVIALICTIILVTF). H151 and D155 together coordinate Zn(2+). 2 helical membrane passes run 154-174 (SDVMMNGAILIALGLSWYGWH) and 176-196 (ADALFALGIGIYILYSALRMG).

This sequence belongs to the cation diffusion facilitator (CDF) transporter (TC 2.A.4) family. FieF subfamily. In terms of assembly, homodimer.

Its subcellular location is the cell inner membrane. The catalysed reaction is Zn(2+)(in) + H(+)(out) = Zn(2+)(out) + H(+)(in). It carries out the reaction Cd(2+)(in) + H(+)(out) = Cd(2+)(out) + H(+)(in). It catalyses the reaction Fe(2+)(in) + H(+)(out) = Fe(2+)(out) + H(+)(in). Its function is as follows. Divalent metal cation transporter which exports Zn(2+), Cd(2+) and possibly Fe(2+). May be involved in zinc and iron detoxification by efflux. In Salmonella typhi, this protein is Cation-efflux pump FieF.